Here is a 600-residue protein sequence, read N- to C-terminus: MAPSSKSERNSGAGSGGGGPGGAGGKRAAGRRREHVLKQLERVKISGQLSPRLFRKLPPRVCVSLKNIVDEDFLYAGHIFLGFSKCGRYVLSYTSSSGDDDFSFYIYHLYWWEFNVHSKLKLVRQVRLFQDEEIYSDLYLTVCEWPSDASKVIVFGFNTRSANGMLMNMMMMSDENHRDIYVSTVAVPPPGRCAACQDASRAHPGDPNAQCLRHGFMLHTKYQVVYPFPTFQPAFQLKKDQVVLLNTSYSLVACAVSVHSAGDRSFCQILYDHSTCPLAPASPPEPQSPELPPALPSFCPEAAPARSSGSPEPSPAIAKAKEFVADIFRRAKEAKGGVPEEARPALCPGPSGSRCRAHSEPLALCGETAPRDSPPASEAPASEPGYVNYTKLYYVLESGEGTEPEDELEDDKISLPFVVTDLRGRNLRPMRERTAVQGQYLTVEQLTLDFEYVINEVIRHDATWGHQFCSFSDYDIVILEVCPETNQVLINIGLLLLAFPSPTEEGQLRPKTYHTSLKVAWDLNTGIFETVSVGDLTEVKGQTSGSVWSSYRKSCVDMVMKWLVPESSGRYVNRMTNEALHKGCSLKVLADSERYTWIVL.

The segment at 1-30 (MAPSSKSERNSGAGSGGGGPGGAGGKRAAG) is disordered. Positions 13-27 (AGSGGGGPGGAGGKR) are enriched in gly residues. S50 carries the post-translational modification Phosphoserine. Positions 193, 196, 211, and 214 each coordinate Zn(2+). E7820-binding positions include F231 and 234–235 (AF). Residues 280-295 (PASPPEPQSPELPPAL) are compositionally biased toward pro residues. The interval 280–316 (PASPPEPQSPELPPALPSFCPEAAPARSSGSPEPSPA) is disordered. Residues S310 and S314 each carry the phosphoserine modification.

As to quaternary structure, component of the DCX(DCAF15) complex, also named CLR4(DCAF15) complex, composed of DCAF15, DDB1, cullin-4 (CUL4A or CUL4B), DDA1 and RBX1.

Its pathway is protein modification; protein ubiquitination. With respect to regulation, aryl sulfonamide anticancer drugs change the substrate specificity of DCAF15 by acting as a molecular glue that promotes binding between DCAF15 and weak affinity interactors, such as RBM39. In terms of biological role, substrate-recognition component of the DCX(DCAF15) complex, a cullin-4-RING E3 ubiquitin-protein ligase complex that mediates ubiquitination and degradation of target proteins. The DCX(DCAF15) complex acts as a regulator of the natural killer (NK) cells effector functions, possibly by mediating ubiquitination and degradation of cohesin subunits SMC1A and SMC3. May play a role in the activation of antigen-presenting cells (APC) and their interaction with NK cells. Its function is as follows. Binding of aryl sulfonamide anticancer drugs, such as indisulam (E7070) or E7820, change the substrate specificity of the DCX(DCAF15) complex, leading to promote ubiquitination and degradation of splicing factor RBM39. RBM39 degradation results in splicing defects and death in cancer cell lines. Aryl sulfonamide anticancer drugs change the substrate specificity of DCAF15 by acting as a molecular glue that promotes binding between DCAF15 and weak affinity interactor RBM39. Aryl sulfonamide anticancer drugs also promote ubiquitination and degradation of RBM23 and PRPF39. This Homo sapiens (Human) protein is DDB1- and CUL4-associated factor 15.